The primary structure comprises 187 residues: UPF0167 protein MT2352 (187 aa).

It belongs to the UPF0167 family.

The sequence is that of UPF0167 protein MT2352 from Mycobacterium tuberculosis (strain CDC 1551 / Oshkosh).